Here is an 865-residue protein sequence, read N- to C-terminus: Probable beta-glucosidase J (865 aa).

Asp233 is an active-site residue. N-linked (GlcNAc...) asparagine glycans are attached at residues Asn330, Asn447, Asn503, and Asn764. In terms of domain architecture, PA14 spans 411-579 (TGQPGYTFRV…DTDTAIQQAV (169 aa)).

It belongs to the glycosyl hydrolase 3 family.

It is found in the secreted. It catalyses the reaction Hydrolysis of terminal, non-reducing beta-D-glucosyl residues with release of beta-D-glucose.. It functions in the pathway glycan metabolism; cellulose degradation. Beta-glucosidases are one of a number of cellulolytic enzymes involved in the degradation of cellulosic biomass. Catalyzes the last step releasing glucose from the inhibitory cellobiose. The polypeptide is Probable beta-glucosidase J (bglJ) (Aspergillus fumigatus (strain ATCC MYA-4609 / CBS 101355 / FGSC A1100 / Af293) (Neosartorya fumigata)).